Here is a 36-residue protein sequence, read N- to C-terminus: Pancreatic polypeptide (36 aa).

Position 36 is a phenylalanine amide (F36).

It belongs to the NPY family.

It is found in the secreted. Functionally, hormone secreted by pancreatic cells that acts as a regulator of pancreatic and gastrointestinal functions. The protein is Pancreatic polypeptide (ppy) of Alligator mississippiensis (American alligator).